The chain runs to 401 residues: Heat stress transcription factor A-4a (401 aa).

Residues 13 to 107 (LPPFLTKTYE…LMKNIHRRKP (95 aa)) mediate DNA binding. The segment at 122 to 188 (PLTDSERVRM…TMVSFVSQVL (67 aa)) is hydrophobic repeat HR-A/B. Positions 207–213 (RKRRFPR) match the Nuclear localization signal motif. An AHA1 motif is present at residues 256–265 (IAIWENLVSD). The short motif at 341 to 350 (DGFWQQFFSE) is the AHA2 element. Positions 351 to 373 (NPGSTEQREVQLERKDDKDKAGV) are disordered. Over residues 356-373 (EQREVQLERKDDKDKAGV) the composition is skewed to basic and acidic residues. Positions 388 to 395 (ITEQLGHL) match the Nuclear export signal motif.

It belongs to the HSF family. Class A subfamily. Homotrimer. In terms of processing, exhibits temperature-dependent phosphorylation.

It localises to the cytoplasm. The protein localises to the nucleus. Transcriptional activator that specifically binds DNA sequence 5'-AGAAnnTTCT-3' known as heat shock promoter elements (HSE). In Arabidopsis thaliana (Mouse-ear cress), this protein is Heat stress transcription factor A-4a (HSFA4A).